The chain runs to 382 residues: Alanine racemase (382 aa).

Catalysis depends on lysine 39, which acts as the Proton acceptor; specific for D-alanine. Lysine 39 bears the N6-(pyridoxal phosphate)lysine mark. Arginine 138 is a binding site for substrate. Tyrosine 265 functions as the Proton acceptor; specific for L-alanine in the catalytic mechanism. Methionine 312 is a substrate binding site.

Belongs to the alanine racemase family. It depends on pyridoxal 5'-phosphate as a cofactor.

It carries out the reaction L-alanine = D-alanine. Its pathway is amino-acid biosynthesis; D-alanine biosynthesis; D-alanine from L-alanine: step 1/1. Catalyzes the interconversion of L-alanine and D-alanine. May also act on other amino acids. This Staphylococcus saprophyticus subsp. saprophyticus (strain ATCC 15305 / DSM 20229 / NCIMB 8711 / NCTC 7292 / S-41) protein is Alanine racemase (alr).